Here is a 305-residue protein sequence, read N- to C-terminus: Major fimbrium anchoring subunit FimB (305 aa).

The first 22 residues, 1–22, serve as a signal peptide directing secretion; the sequence is MNDAKKYIVSVLILLVAGMFGG. C23 carries the N-palmitoyl cysteine lipid modification. C23 carries the S-diacylglycerol cysteine lipid modification.

The protein belongs to the bacteroidetes fimbrillin superfamily. FimB/Mfa2 family. As to quaternary structure, fimB is not part of the fimbrium itself, but anchors the fimbrium in the outer membrane. Linear, head-to-tail oligomerization of fimbrial subunits mediates assembly of the fimbrium stalk, while the minor components FimC, FimD and FimE probably form the fimbrium tip. The anchoring subunit FimB limits fimbrium length and is important for solid fimbrium attachment to the outer membrane. In its absence, the major fimbriae become very long and are easily detached from the membrane.

It localises to the cell outer membrane. In terms of biological role, anchoring subunit of the major fimbriae. Regulates fimbrial length. These filamentous pili are attached to the cell surface; they mediate biofilm formation, adhesion onto host cells and onto other bacteria that are part of the oral microbiome. Fimbriae of P.gingivalis are major virulence factors. This chain is Major fimbrium anchoring subunit FimB, found in Porphyromonas gingivalis (Bacteroides gingivalis).